Reading from the N-terminus, the 142-residue chain is Protein archease (142 aa).

Ca(2+) is bound by residues D12 and D141.

It belongs to the archease family.

Activates the tRNA-splicing ligase complex by facilitating the enzymatic turnover of catalytic subunit RtcB. Acts by promoting the guanylylation of RtcB, a key intermediate step in tRNA ligation. Can also alter the NTP specificity of RtcB such that ATP, dGTP or ITP is used efficiently. The protein is Protein archease of Thermococcus kodakarensis (strain ATCC BAA-918 / JCM 12380 / KOD1) (Pyrococcus kodakaraensis (strain KOD1)).